We begin with the raw amino-acid sequence, 276 residues long: Digeranylgeranylglyceryl phosphate synthase (276 aa).

A run of 5 helical transmembrane segments spans residues 14–34 (VNTL…GGAV), 90–110 (VVLF…AVCI), 144–164 (FVFG…AALA), 200–220 (ALAV…VPYL), and 221–241 (VGVF…VMVV).

Belongs to the UbiA prenyltransferase family. DGGGP synthase subfamily. The cofactor is Mg(2+).

The protein localises to the cell membrane. It catalyses the reaction sn-3-O-(geranylgeranyl)glycerol 1-phosphate + (2E,6E,10E)-geranylgeranyl diphosphate = 2,3-bis-O-(geranylgeranyl)-sn-glycerol 1-phosphate + diphosphate. Its pathway is membrane lipid metabolism; glycerophospholipid metabolism. Functionally, prenyltransferase that catalyzes the transfer of the geranylgeranyl moiety of geranylgeranyl diphosphate (GGPP) to the C2 hydroxyl of (S)-3-O-geranylgeranylglyceryl phosphate (GGGP). This reaction is the second ether-bond-formation step in the biosynthesis of archaeal membrane lipids. In Halobacterium salinarum (strain ATCC 29341 / DSM 671 / R1), this protein is Digeranylgeranylglyceryl phosphate synthase.